The primary structure comprises 163 residues: EF-hand calcium-binding domain-containing protein 11 (163 aa).

EF-hand domains follow at residues 18–53 (SEHR…LFGY), 91–126 (RYRN…VAPK), and 127–162 (LPER…GQKE). Residues aspartate 140, aspartate 142, aspartate 144, histidine 146, and aspartate 151 each contribute to the Ca(2+) site.

The polypeptide is EF-hand calcium-binding domain-containing protein 11 (EFCAB11) (Homo sapiens (Human)).